We begin with the raw amino-acid sequence, 371 residues long: Queuine tRNA-ribosyltransferase (371 aa).

D90 functions as the Proton acceptor in the catalytic mechanism. Substrate is bound by residues 90 to 94 (DSGGF), D144, Q185, and G212. Positions 243-249 (GVGTPED) are RNA binding. The active-site Nucleophile is D262. Positions 267-271 (TRNAR) are RNA binding; important for wobble base 34 recognition. 4 residues coordinate Zn(2+): C300, C302, C305, and H331.

Belongs to the queuine tRNA-ribosyltransferase family. Homodimer. Within each dimer, one monomer is responsible for RNA recognition and catalysis, while the other monomer binds to the replacement base PreQ1. Zn(2+) serves as cofactor.

It catalyses the reaction 7-aminomethyl-7-carbaguanine + guanosine(34) in tRNA = 7-aminomethyl-7-carbaguanosine(34) in tRNA + guanine. It participates in tRNA modification; tRNA-queuosine biosynthesis. Catalyzes the base-exchange of a guanine (G) residue with the queuine precursor 7-aminomethyl-7-deazaguanine (PreQ1) at position 34 (anticodon wobble position) in tRNAs with GU(N) anticodons (tRNA-Asp, -Asn, -His and -Tyr). Catalysis occurs through a double-displacement mechanism. The nucleophile active site attacks the C1' of nucleotide 34 to detach the guanine base from the RNA, forming a covalent enzyme-RNA intermediate. The proton acceptor active site deprotonates the incoming PreQ1, allowing a nucleophilic attack on the C1' of the ribose to form the product. After dissociation, two additional enzymatic reactions on the tRNA convert PreQ1 to queuine (Q), resulting in the hypermodified nucleoside queuosine (7-(((4,5-cis-dihydroxy-2-cyclopenten-1-yl)amino)methyl)-7-deazaguanosine). This Acidithiobacillus ferrooxidans (strain ATCC 23270 / DSM 14882 / CIP 104768 / NCIMB 8455) (Ferrobacillus ferrooxidans (strain ATCC 23270)) protein is Queuine tRNA-ribosyltransferase.